Consider the following 334-residue polypeptide: Type II methyltransferase M.NlaIII (334 aa).

The protein belongs to the N(4)/N(6)-methyltransferase family.

The catalysed reaction is a 2'-deoxyadenosine in DNA + S-adenosyl-L-methionine = an N(6)-methyl-2'-deoxyadenosine in DNA + S-adenosyl-L-homocysteine + H(+). Its function is as follows. A methylase, recognizes the double-stranded sequence 5'-CATG-3', methylates A-2 on both strands and protects the DNA from cleavage by the NlaIII endonuclease. The polypeptide is Type II methyltransferase M.NlaIII (nlaIIIM) (Neisseria lactamica).